The sequence spans 725 residues: Methionine--tRNA ligase (725 aa).

The 'HIGH' region signature appears at 27 to 37; the sequence is PYANGQIHIGH. Positions 158, 161, 171, and 174 each coordinate Zn(2+). Positions 348 to 352 match the 'KMSKS' region motif; that stretch reads KMSKS. Lysine 351 contributes to the ATP binding site. In terms of domain architecture, tRNA-binding spans 619–725; sequence DFAKIDLRIA…SGAKPGMRVK (107 aa).

This sequence belongs to the class-I aminoacyl-tRNA synthetase family. MetG type 1 subfamily. Homodimer. It depends on Zn(2+) as a cofactor.

It is found in the cytoplasm. It carries out the reaction tRNA(Met) + L-methionine + ATP = L-methionyl-tRNA(Met) + AMP + diphosphate. In terms of biological role, is required not only for elongation of protein synthesis but also for the initiation of all mRNA translation through initiator tRNA(fMet) aminoacylation. The polypeptide is Methionine--tRNA ligase (Burkholderia mallei (strain NCTC 10247)).